A 278-amino-acid polypeptide reads, in one-letter code: Undecaprenyl-diphosphatase (278 aa).

8 consecutive transmembrane segments (helical) span residues 3–23, 42–62, 88–108, 112–132, 152–172, 190–210, 225–245, and 253–273; these read YILI…IPIS, VAYS…IIYF, FLVI…LFVI, ILGL…IIIY, IIIV…RSGI, LSFI…VLFS, GLLI…NALL, and VVVL…LSGI.

It belongs to the UppP family.

The protein resides in the cell membrane. It carries out the reaction di-trans,octa-cis-undecaprenyl diphosphate + H2O = di-trans,octa-cis-undecaprenyl phosphate + phosphate + H(+). Functionally, catalyzes the dephosphorylation of undecaprenyl diphosphate (UPP). This Saccharolobus islandicus (strain M.14.25 / Kamchatka #1) (Sulfolobus islandicus) protein is Undecaprenyl-diphosphatase.